The following is a 3418-amino-acid chain: Breast cancer type 2 susceptibility protein (3418 aa).

The segment at Met1 to Pro40 is interaction with PALB2. The segment at Ser37 to Lys68 is disordered. Ser70 carries the post-translational modification Phosphoserine. The disordered stretch occupies residues Val358–Asp381. 3 positions are modified to phosphoserine: Ser445, Ser492, and Ser755. The interaction with NPM1 stretch occupies residues Leu639–Ile1000. BRCA2 repeat units lie at residues Asn1002–Glu1036, Asn1212–Asn1246, Phe1421–Glu1455, Lys1517–Gln1551, Ile1664–Phe1698, and Phe1837–Ser1871. Positions His1003 to Glu2082 are interaction with RAD51. The interval Gly1338 to Asp1781 is interaction with POLH. Residues Thr1410–Gln1595 are required for stimulation of POLH DNA polymerization activity. A Phosphoserine modification is found at Ser1970. The stretch at Ser1971–Asp2005 is one BRCA2 7 repeat. Phosphothreonine is present on Thr2035. The stretch at Asn2051–Leu2085 is one BRCA2 8 repeat. Ser2095 bears the Phosphoserine mark. Positions Gly2270–Thr2337 are interaction with HSF2BP. Residues Thr2350 to Val2545 are interaction with FANCD2. Residues Glu2430–Asn2450 form a disordered region. The interval Ile2481–Glu2832 is interaction with SEM1. The Nuclear export signal; masked by interaction with SEM1 signature appears at Ala2682 to Ala2698. The residue at position 3291 (Ser3291) is a Phosphoserine; by CDK1 and CDK2. Ser3319 carries the post-translational modification Phosphoserine. The residue at position 3387 (Thr3387) is a Phosphothreonine; by CHEK1 and CHEK2. Positions Glu3393 to Ile3418 are disordered.

Monomer and dimer. Interacts with RAD51; regulates RAD51 recruitment and function at sites of DNA repair. Interacts with WDR16, USP11, DMC1, ROCK2 and NPM1. Interacts with SEM1; the interaction masks a nuclear export signal in BRCA2. Interacts with both nonubiquitinated and monoubiquitinated FANCD2; this complex also includes XRCC3 and phosphorylated FANCG. Part of a BRCA complex containing BRCA1, BRCA2 and PALB2. Component of the homologous recombination repair (HR) complex composed of ERCC5/XPG, BRCA2, PALB2, DSS1 and RAD51. Within the complex, interacts with ERCC5/XPG and PALB2. Interacts directly with PALB2 which may serve as a scaffold for a HR complex containing PALB2, BRCA2, RAD51C, RAD51 and XRCC3. Interacts with BRCA1 only in the presence of PALB2 which serves as the bridging protein. Interacts with POLH; the interaction is direct. Interacts with the TREX-2 complex subunits PCID2 and SEM1. Interacts with HSF2BP and BRME1; the interaction with HSF2BP is direct and allows the formation of a ternary complex. The complex BRME1:HSF2BP:BRCA2 interacts with SPATA22, MEIOB and RAD51. Phosphorylated by ATM upon irradiation-induced DNA damage. Phosphorylation by CHEK1 and CHEK2 regulates interaction with RAD51. Phosphorylation at Ser-3291 by CDK1 and CDK2 is low in S phase when recombination is active, but increases as cells progress towards mitosis; this phosphorylation prevents homologous recombination-dependent repair during S phase and G2 by inhibiting RAD51 binding. Post-translationally, ubiquitinated in the absence of DNA damage; this does not lead to proteasomal degradation. In contrast, ubiquitination in response to DNA damage leads to proteasomal degradation. Highest levels of expression in breast and thymus, with slightly lower levels in lung, ovary and spleen.

It is found in the nucleus. It localises to the cytoplasm. Its subcellular location is the cytoskeleton. The protein resides in the microtubule organizing center. The protein localises to the centrosome. Functionally, involved in double-strand break repair and/or homologous recombination. Binds RAD51 and potentiates recombinational DNA repair by promoting assembly of RAD51 onto single-stranded DNA (ssDNA). Acts by targeting RAD51 to ssDNA over double-stranded DNA, enabling RAD51 to displace replication protein-A (RPA) from ssDNA and stabilizing RAD51-ssDNA filaments by blocking ATP hydrolysis. Part of a PALB2-scaffolded HR complex containing RAD51C and which is thought to play a role in DNA repair by HR. May participate in S phase checkpoint activation. Binds selectively to ssDNA, and to ssDNA in tailed duplexes and replication fork structures. May play a role in the extension step after strand invasion at replication-dependent DNA double-strand breaks; together with PALB2 is involved in both POLH localization at collapsed replication forks and DNA polymerization activity. In concert with NPM1, regulates centrosome duplication. Interacts with the TREX-2 complex (transcription and export complex 2) subunits PCID2 and SEM1, and is required to prevent R-loop-associated DNA damage and thus transcription-associated genomic instability. Silencing of BRCA2 promotes R-loop accumulation at actively transcribed genes in replicating and non-replicating cells, suggesting that BRCA2 mediates the control of R-loop associated genomic instability, independently of its known role in homologous recombination. In Homo sapiens (Human), this protein is Breast cancer type 2 susceptibility protein.